The following is a 370-amino-acid chain: MHLESIVLRNFRNYENLELEFSPSVNVFLGENAQGKTNLLEAVLMLALAKSHRTTNDKDFIMWEKEEAKMEGRIAKHGQSVPLELAITQKGKRAKVNHLEQKKLSQYVGNLNVVIFAPEDLSLVKGAPGIRRRFLNMEIGQMQPIYLHNLSEYQRILQQRNQYLKMLQMKRKVDPILLDILTEQFADVAINLTKRRADFIQKLEAYAAPIHHQISRGLETLKIEYKASITLNGDDPEVWKADLLQKMESIKQREIDRGVTLIGPHRDDSLFYINGQNVQDFGSQGQQRTTALSIKLAEIDLIHEETGEYPVLLLDDVLSELDDYRQSHLLGAIEGKVQTFVTTTSTSGIDHETLKQATTFYVEKGTVKKS.

ATP is bound at residue 30–37 (GENAQGKT).

The protein belongs to the RecF family.

The protein resides in the cytoplasm. In terms of biological role, the RecF protein is involved in DNA metabolism; it is required for DNA replication and normal SOS inducibility. RecF binds preferentially to single-stranded, linear DNA. It also seems to bind ATP. In Listeria monocytogenes serotype 4b (strain CLIP80459), this protein is DNA replication and repair protein RecF.